An 88-amino-acid polypeptide reads, in one-letter code: Small ribosomal subunit protein bS20 (88 aa).

The segment covering 1-11 (MANIKSSEKDI) has biased composition (basic and acidic residues). Disordered regions lie at residues 1–31 (MANI…LRTQ) and 69–88 (SKNA…SSAA).

The protein belongs to the bacterial ribosomal protein bS20 family.

Functionally, binds directly to 16S ribosomal RNA. This chain is Small ribosomal subunit protein bS20, found in Leptospira interrogans serogroup Icterohaemorrhagiae serovar copenhageni (strain Fiocruz L1-130).